A 276-amino-acid polypeptide reads, in one-letter code: NH(3)-dependent NAD(+) synthetase (276 aa).

43–50 contributes to the ATP binding site; that stretch reads GISGGVDS. Asp49 contacts Mg(2+). Residue Arg146 coordinates deamido-NAD(+). Thr166 contacts ATP. Glu171 is a binding site for Mg(2+). Deamido-NAD(+)-binding residues include Lys179 and Asp186. Residues Lys195 and Thr217 each contribute to the ATP site. 266-267 contributes to the deamido-NAD(+) binding site; it reads HK.

It belongs to the NAD synthetase family. As to quaternary structure, homodimer.

The catalysed reaction is deamido-NAD(+) + NH4(+) + ATP = AMP + diphosphate + NAD(+) + H(+). Its pathway is cofactor biosynthesis; NAD(+) biosynthesis; NAD(+) from deamido-NAD(+) (ammonia route): step 1/1. In terms of biological role, catalyzes the ATP-dependent amidation of deamido-NAD to form NAD. Uses ammonia as a nitrogen source. The chain is NH(3)-dependent NAD(+) synthetase from Shewanella piezotolerans (strain WP3 / JCM 13877).